The following is a 94-amino-acid chain: MSEESGRRNLRMPSDDEMFAVVVEHNGGNHVRVRCQDGENRMGRIPGRMKYRTWINEGDVVLVEPWAWQDEKANIEWRYSEQDAEQLRTEGHIK.

Residues 6–80 (GRRNLRMPSD…EKANIEWRYS (75 aa)) form the S1-like domain.

It belongs to the eIF-1A family.

Functionally, seems to be required for maximal rate of protein biosynthesis. Enhances ribosome dissociation into subunits and stabilizes the binding of the initiator Met-tRNA(I) to 40 S ribosomal subunits. The chain is Translation initiation factor 1A 2 from Haloquadratum walsbyi (strain DSM 16790 / HBSQ001).